The following is a 288-amino-acid chain: Adenylate kinase (288 aa).

65–70 (GVGKGT) contributes to the ATP binding site. The NMP stretch occupies residues 85-114 (ATGDLVRDELKSSGPLSKQLAEIVNQGKLV). AMP is bound by residues T86, R91, 112 to 114 (KLV), 142 to 145 (GFPR), and Q149. An LID region spans residues 178–226 (GRRICSECGKNFNVASIDVAGENGAPRISMARLNPPFTVCFKLITRADD). Residue R179 coordinates ATP. Residues R223 and R234 each contribute to the AMP site. G262 contacts ATP.

This sequence belongs to the adenylate kinase family. Monomer.

Its subcellular location is the cytoplasm. It carries out the reaction AMP + ATP = 2 ADP. Its function is as follows. Catalyzes the reversible transfer of the terminal phosphate group between ATP and AMP. Plays an important role in cellular energy homeostasis and in adenine nucleotide metabolism. This is Adenylate kinase (ADK) from Solanum tuberosum (Potato).